The primary structure comprises 269 residues: Tryptophan synthase alpha chain (269 aa).

Catalysis depends on proton acceptor residues Glu49 and Asp60.

The protein belongs to the TrpA family. As to quaternary structure, tetramer of two alpha and two beta chains.

The catalysed reaction is (1S,2R)-1-C-(indol-3-yl)glycerol 3-phosphate + L-serine = D-glyceraldehyde 3-phosphate + L-tryptophan + H2O. Its pathway is amino-acid biosynthesis; L-tryptophan biosynthesis; L-tryptophan from chorismate: step 5/5. The alpha subunit is responsible for the aldol cleavage of indoleglycerol phosphate to indole and glyceraldehyde 3-phosphate. This is Tryptophan synthase alpha chain from Acidovorax ebreus (strain TPSY) (Diaphorobacter sp. (strain TPSY)).